Reading from the N-terminus, the 388-residue chain is Formate-dependent phosphoribosylglycinamide formyltransferase (388 aa).

Residues 21–22 and Glu81 contribute to the N(1)-(5-phospho-beta-D-ribosyl)glycinamide site; that span reads EL. ATP-binding positions include Arg113, Lys154, 159–164, 193–196, and Glu201; these read SSGHGQ and EEFI. The ATP-grasp domain maps to 118–306; that stretch reads KFAAEELGLK…EFALHVRAVL (189 aa). Glu265 and Glu277 together coordinate Mg(2+). N(1)-(5-phospho-beta-D-ribosyl)glycinamide is bound by residues Asp284, Lys352, and 359–360; that span reads RR.

It belongs to the PurK/PurT family. Homodimer.

The enzyme catalyses N(1)-(5-phospho-beta-D-ribosyl)glycinamide + formate + ATP = N(2)-formyl-N(1)-(5-phospho-beta-D-ribosyl)glycinamide + ADP + phosphate + H(+). It functions in the pathway purine metabolism; IMP biosynthesis via de novo pathway; N(2)-formyl-N(1)-(5-phospho-D-ribosyl)glycinamide from N(1)-(5-phospho-D-ribosyl)glycinamide (formate route): step 1/1. Involved in the de novo purine biosynthesis. Catalyzes the transfer of formate to 5-phospho-ribosyl-glycinamide (GAR), producing 5-phospho-ribosyl-N-formylglycinamide (FGAR). Formate is provided by PurU via hydrolysis of 10-formyl-tetrahydrofolate. This chain is Formate-dependent phosphoribosylglycinamide formyltransferase, found in Nitratiruptor sp. (strain SB155-2).